The chain runs to 502 residues: ATP synthase subunit alpha (502 aa).

169–176 is a binding site for ATP; it reads GDRQTGKT.

Belongs to the ATPase alpha/beta chains family. In terms of assembly, F-type ATPases have 2 components, CF(1) - the catalytic core - and CF(0) - the membrane proton channel. CF(1) has five subunits: alpha(3), beta(3), gamma(1), delta(1), epsilon(1). CF(0) has three main subunits: a(1), b(2) and c(9-12). The alpha and beta chains form an alternating ring which encloses part of the gamma chain. CF(1) is attached to CF(0) by a central stalk formed by the gamma and epsilon chains, while a peripheral stalk is formed by the delta and b chains.

The protein localises to the cell membrane. The enzyme catalyses ATP + H2O + 4 H(+)(in) = ADP + phosphate + 5 H(+)(out). Its function is as follows. Produces ATP from ADP in the presence of a proton gradient across the membrane. The alpha chain is a regulatory subunit. The polypeptide is ATP synthase subunit alpha (Exiguobacterium sibiricum (strain DSM 17290 / CCUG 55495 / CIP 109462 / JCM 13490 / 255-15)).